The following is a 41-amino-acid chain: Diuretic hormone 1 (41 aa).

Isoleucine amide is present on Ile-41.

Its subcellular location is the secreted. Regulation of fluid secretion. May stimulate primary urine secretion by Malpighian tubules and causes a dose-dependent stimulation of cAMP levels in the tubules. This Hyles lineata (White-lined sphinx moth) protein is Diuretic hormone 1.